The chain runs to 248 residues: Ribosomal RNA small subunit methyltransferase G (248 aa).

Residues G85, F90, 108–110 (DSS), 137–138 (AE), and R156 contribute to the S-adenosyl-L-methionine site.

It belongs to the methyltransferase superfamily. RNA methyltransferase RsmG family.

The protein localises to the cytoplasm. Specifically methylates the N7 position of a guanine in 16S rRNA. The chain is Ribosomal RNA small subunit methyltransferase G from Prochlorococcus marinus (strain NATL1A).